Here is a 77-residue protein sequence, read N- to C-terminus: Large ribosomal subunit protein uL24c (77 aa).

Belongs to the universal ribosomal protein uL24 family. As to quaternary structure, part of the 50S ribosomal subunit.

The protein resides in the plastid. The protein localises to the chloroplast. In terms of biological role, one of two assembly initiator proteins, it binds directly to the 5'-end of the 23S rRNA, where it nucleates assembly of the 50S subunit. The sequence is that of Large ribosomal subunit protein uL24c (rpl24) from Thalassiosira pseudonana (Marine diatom).